The chain runs to 291 residues: ATP synthase gamma chain (291 aa).

It belongs to the ATPase gamma chain family. As to quaternary structure, F-type ATPases have 2 components, CF(1) - the catalytic core - and CF(0) - the membrane proton channel. CF(1) has five subunits: alpha(3), beta(3), gamma(1), delta(1), epsilon(1). CF(0) has three main subunits: a, b and c.

It localises to the cell inner membrane. Its function is as follows. Produces ATP from ADP in the presence of a proton gradient across the membrane. The gamma chain is believed to be important in regulating ATPase activity and the flow of protons through the CF(0) complex. The polypeptide is ATP synthase gamma chain (Cupriavidus necator (strain ATCC 17699 / DSM 428 / KCTC 22496 / NCIMB 10442 / H16 / Stanier 337) (Ralstonia eutropha)).